A 155-amino-acid polypeptide reads, in one-letter code: MWEVAWWRPGTWGGLAMRVGQVAFAGASIGVMASGAGFANYTAFCYLIASMGLQSLWSLGLACLDVYALTVKRDLNNALLVSLFVIGDWVTALLSFAASCSAGGVMVLFKRDVLFCRRYPQLPCGRFELAVALAFLSWALSATSAIIMFCLLAAF.

Over 1-18 (MWEVAWWRPGTWGGLAMR) the chain is Cytoplasmic. A helical membrane pass occupies residues 19 to 39 (VGQVAFAGASIGVMASGAGFA). N-linked (GlcNAc...) asparagine glycosylation is present at Asn40. The Extracellular portion of the chain corresponds to 40-43 (NYTA). The chain crosses the membrane as a helical span at residues 44–64 (FCYLIASMGLQSLWSLGLACL). Residues 65-77 (DVYALTVKRDLNN) are Cytoplasmic-facing. A helical transmembrane segment spans residues 78–98 (ALLVSLFVIGDWVTALLSFAA). Topologically, residues 99 to 128 (SCSAGGVMVLFKRDVLFCRRYPQLPCGRFE) are extracellular. Residues 129 to 149 (LAVALAFLSWALSATSAIIMF) traverse the membrane as a helical segment. Residues 150-155 (CLLAAF) are Cytoplasmic-facing.

The protein belongs to the Casparian strip membrane proteins (CASP) family. As to quaternary structure, homodimer and heterodimers.

The protein localises to the cell membrane. The chain is CASP-like protein 5B2 from Oryza sativa subsp. indica (Rice).